Reading from the N-terminus, the 434-residue chain is MTVTDIARRVYNHTWKLDPICRSLLDTDFYKLLMLQMIWGLYQDVDATFSLTNRNHRVRLADEIDEAELRAQLDHARTIRFSKKEMIWLAGNSFYGRKQIFSPEFLAWLADFQLPEYELRRRDGQFELHFYGRWMETTMWEIPALAIINELRSRAAMRTLGRFALDVLYARAKAKVWEKVERLKKYPDIRISDFGTRRRHSFLWQRWCVEALKEGIGESFTGTSNVLLAMDTDLEALGTNAHELPMVLAALSSSDEELKASPYQVLKDWQSYYGGNLLIVLPDTFGTESFLEDAPGWVADWTGFRPDSAPPIEGGERIISWWEQHGRDPREKLLIFSDALDVDTIEQTYRHFKGRSRLSFGWGTNLTNDFDGCAPEKIDRLKAISLVCKVSSANGRPAVKLSDNPEKATGRPEEIQRYLRVFGSRNRVHQPVEV.

The residue at position 242 (H242) is a Phosphohistidine; by autocatalysis.

It belongs to the NAPRTase family. Post-translationally, transiently phosphorylated on a His residue during the reaction cycle. Phosphorylation strongly increases the affinity for substrates and increases the rate of nicotinate D-ribonucleotide production. Dephosphorylation regenerates the low-affinity form of the enzyme, leading to product release.

The catalysed reaction is nicotinate + 5-phospho-alpha-D-ribose 1-diphosphate + ATP + H2O = nicotinate beta-D-ribonucleotide + ADP + phosphate + diphosphate. It participates in cofactor biosynthesis; NAD(+) biosynthesis; nicotinate D-ribonucleotide from nicotinate: step 1/1. Catalyzes the synthesis of beta-nicotinate D-ribonucleotide from nicotinate and 5-phospho-D-ribose 1-phosphate at the expense of ATP. This chain is Nicotinate phosphoribosyltransferase, found in Chelativorans sp. (strain BNC1).